A 343-amino-acid chain; its full sequence is MSKTNKKISSDINHTTKYGSKTPKKVYLSNKVIKRNKNDIRNISYKEINDEFSWGNYLNLKVIIMNDNGYINVTKLIQQANKEKKMGDWNKNKDSKNIVKSACEYTGLTEDKLFIIKTGGNNSTIRGTYAHPIIVAQIAGWASSDFAIKASVIINDYIAKQMFKEHEKIIEEKDKTIKRRDKKIDQLNNKMDDLLKKNDKMSKRIKRLVDTADDLRNQNDDINDKLDVVCNDRVVQSDTNTHRFVIMKNNSDKEDYEYHSIRRLKNSVNNAVKEYKELYPDAEIIMNLGYTPNSICLWNNIKKKLKSKRKIKGTGSDFNLRGDFTEEKLIEEVTKIHNSRFER.

In terms of domain architecture, KilA-N spans Glu-51 to Tyr-157. Residues Ala-159 to Tyr-279 are a coiled coil.

This Acanthamoeba polyphaga mimivirus (APMV) protein is Putative KilA-N domain-containing protein R904.